We begin with the raw amino-acid sequence, 318 residues long: Myeloid-associated differentiation marker (318 aa).

MARVEL domains are found at residues 25–157 (ALTQ…ARPG) and 162–315 (YMAT…RLVF). The next 8 membrane-spanning stretches (helical) occupy residues 35 to 55 (LLQL…GAWT), 58 to 78 (MGNW…IILI), 95 to 115 (FPIT…IIYP), 131 to 151 (AIAA…EVAW), 165 to 185 (TVPG…FAFI), 197 to 217 (LEWC…TVLL), 233 to 253 (FLSG…VLWP), and 290 to 310 (LAVS…LVYS).

It belongs to the MAL family.

Its subcellular location is the membrane. The protein is Myeloid-associated differentiation marker (Myadm) of Rattus norvegicus (Rat).